Consider the following 134-residue polypeptide: Methylglyoxal synthase (134 aa).

The region spanning 1–134 (MVNLNIALIA…GLLEWRNAVK (134 aa)) is the MGS-like domain. Substrate-binding positions include H11, K15, and 37-40 (TGAT). The active-site Proton donor/acceptor is D63. A substrate-binding site is contributed by H90.

This sequence belongs to the methylglyoxal synthase family.

It catalyses the reaction dihydroxyacetone phosphate = methylglyoxal + phosphate. In terms of biological role, catalyzes the formation of methylglyoxal from dihydroxyacetone phosphate. This is Methylglyoxal synthase from Thermoanaerobacterium thermosaccharolyticum (Clostridium thermosaccharolyticum).